We begin with the raw amino-acid sequence, 342 residues long: Cyclin pch1 (342 aa).

Residues 261-342 are disordered; the sequence is LPIDQKNGSH…TDKEMETEAS (82 aa). Residues 278–314 show a composition bias toward polar residues; sequence TPSSLASVSTQATPQHQNSSGRTDSFHSLNTETPSKS. Phosphothreonine is present on T300. S302 is subject to Phosphoserine. Residues 329–342 are compositionally biased toward basic and acidic residues; the sequence is KSSDTDKEMETEAS.

Belongs to the cyclin family. Cyclin C subfamily. Interacts with cdc2 protein kinase and with the N-terminal domain of cdk9.

The protein resides in the nucleus. Its function is as follows. Essential for progression through the whole cell cycle. This Schizosaccharomyces pombe (strain 972 / ATCC 24843) (Fission yeast) protein is Cyclin pch1 (pch1).